The chain runs to 696 residues: Two-component response regulator ORR22 (696 aa).

Residues 27-142 (RVLAVDDDPV…ELRNIWQHVV (116 aa)) form the Response regulatory domain. Asp78 is modified (4-aspartylphosphate). Residues 154–214 (LDFSKECNKP…DYQENDEPSA (61 aa)) are disordered. The span at 176-185 (TCGSSDQNGR) shows a compositional bias: polar residues. Positions 195 to 211 (GEDDDEGDDNDYQENDE) are enriched in acidic residues. The myb-like GARP DNA-binding region spans 214–273 (AAKKPRVVWSVELHRKFVAAVNQLGIDKAVPKRILELMNVEKLTRENVASHLQKYRLYLK).

This sequence belongs to the ARR family. Type-B subfamily. In terms of processing, two-component system major event consists of a His-to-Asp phosphorelay between a sensor histidine kinase (HK) and a response regulator (RR). In plants, the His-to-Asp phosphorelay involves an additional intermediate named Histidine-containing phosphotransfer protein (HPt). This multistep phosphorelay consists of a His-Asp-His-Asp sequential transfer of a phosphate group between first a His and an Asp of the HK protein, followed by the transfer to a conserved His of the HPt protein and finally the transfer to an Asp in the receiver domain of the RR protein.

The protein resides in the nucleus. Functionally, transcriptional activator that binds specific DNA sequence. Functions as a response regulator involved in His-to-Asp phosphorelay signal transduction system. Phosphorylation of the Asp residue in the receiver domain activates the ability of the protein to promote the transcription of target genes. May directly activate some type-A response regulators in response to cytokinins. This Oryza sativa subsp. indica (Rice) protein is Two-component response regulator ORR22.